Here is a 70-residue protein sequence, read N- to C-terminus: DNA-directed RNA polymerase subunit omega (70 aa).

Belongs to the RNA polymerase subunit omega family. In terms of assembly, the RNAP catalytic core consists of 2 alpha, 1 beta, 1 beta' and 1 omega subunit. When a sigma factor is associated with the core the holoenzyme is formed, which can initiate transcription.

The enzyme catalyses RNA(n) + a ribonucleoside 5'-triphosphate = RNA(n+1) + diphosphate. Promotes RNA polymerase assembly. Latches the N- and C-terminal regions of the beta' subunit thereby facilitating its interaction with the beta and alpha subunits. In Bacillus anthracis, this protein is DNA-directed RNA polymerase subunit omega.